Reading from the N-terminus, the 100-residue chain is Small ribosomal subunit protein uS14m (100 aa).

It belongs to the universal ribosomal protein uS14 family.

It is found in the mitochondrion. The sequence is that of Small ribosomal subunit protein uS14m (RPS14) from Vicia faba (Broad bean).